Consider the following 166-residue polypeptide: MSEAIIAKKAEQVELIAEKMKAAASIVVVDSRGLTVEQDTNLRRSLRESDVEFKVIKNSILTRAAEKAGLEDLKELFVGPSAVAFSNEDVIAPAKVISDFAKDAEALEIKGGSVDGKFTSVEEINALAKLPNKEGMLSMLLSVLQAPVRNVAYAVKAVAEKDEEVA.

It belongs to the universal ribosomal protein uL10 family. In terms of assembly, part of the ribosomal stalk of the 50S ribosomal subunit. The N-terminus interacts with L11 and the large rRNA to form the base of the stalk. The C-terminus forms an elongated spine to which L12 dimers bind in a sequential fashion forming a multimeric L10(L12)X complex.

Functionally, forms part of the ribosomal stalk, playing a central role in the interaction of the ribosome with GTP-bound translation factors. This Streptococcus agalactiae serotype V (strain ATCC BAA-611 / 2603 V/R) protein is Large ribosomal subunit protein uL10.